Here is a 478-residue protein sequence, read N- to C-terminus: 3-isopropylmalate dehydratase large subunit (478 aa).

3 residues coordinate [4Fe-4S] cluster: C347, C407, and C410.

This sequence belongs to the aconitase/IPM isomerase family. LeuC type 1 subfamily. As to quaternary structure, heterodimer of LeuC and LeuD. It depends on [4Fe-4S] cluster as a cofactor.

The catalysed reaction is (2R,3S)-3-isopropylmalate = (2S)-2-isopropylmalate. The protein operates within amino-acid biosynthesis; L-leucine biosynthesis; L-leucine from 3-methyl-2-oxobutanoate: step 2/4. Functionally, catalyzes the isomerization between 2-isopropylmalate and 3-isopropylmalate, via the formation of 2-isopropylmaleate. This Prochlorococcus marinus (strain MIT 9303) protein is 3-isopropylmalate dehydratase large subunit.